We begin with the raw amino-acid sequence, 188 residues long: dCTP deaminase (188 aa).

Residues 111–116 (KSTYAR), 135–137 (TLE), glutamine 156, tyrosine 170, and glutamine 180 contribute to the dCTP site. The Proton donor/acceptor role is filled by glutamate 137.

The protein belongs to the dCTP deaminase family. Homotrimer.

It carries out the reaction dCTP + H2O + H(+) = dUTP + NH4(+). The protein operates within pyrimidine metabolism; dUMP biosynthesis; dUMP from dCTP (dUTP route): step 1/2. Its function is as follows. Catalyzes the deamination of dCTP to dUTP. This is dCTP deaminase from Polaromonas sp. (strain JS666 / ATCC BAA-500).